The sequence spans 46 residues: uncharacterized protein (46 aa).

This is an uncharacterized protein from Haemophilus influenzae (strain ATCC 51907 / DSM 11121 / KW20 / Rd).